A 122-amino-acid polypeptide reads, in one-letter code: Large ribosomal subunit protein bL12 (122 aa).

This sequence belongs to the bacterial ribosomal protein bL12 family. As to quaternary structure, homodimer. Part of the ribosomal stalk of the 50S ribosomal subunit. Forms a multimeric L10(L12)X complex, where L10 forms an elongated spine to which 2 to 4 L12 dimers bind in a sequential fashion. Binds GTP-bound translation factors.

In terms of biological role, forms part of the ribosomal stalk which helps the ribosome interact with GTP-bound translation factors. Is thus essential for accurate translation. This is Large ribosomal subunit protein bL12 from Yersinia enterocolitica serotype O:8 / biotype 1B (strain NCTC 13174 / 8081).